We begin with the raw amino-acid sequence, 543 residues long: Excitatory amino acid transporter 1 (543 aa).

Topologically, residues 1 to 47 (MTKSNGEEPRMGGRMERLQQGVRKRTLLAKKKVQSLTKEDVKSYLFR) are cytoplasmic. A helical transmembrane segment spans residues 48–68 (NAFVLLTVTAVIVGTILGFAL). Over 69-86 (RPYKMSYREVKYFSFPGE) the chain is Extracellular. The chain crosses the membrane as a helical span at residues 87 to 108 (LLMRMLQMLVLPLIISSLVTGM). Topologically, residues 109–122 (AALDSKASGKMGMR) are cytoplasmic. A helical membrane pass occupies residues 123–145 (AVVYYMTTTIIAVVIGIIIVIII). Residues 146 to 236 (HPGKGTKENM…IREEMVPVPG (91 aa)) are Extracellular-facing. 2 N-linked (GlcNAc...) asparagine glycosylation sites follow: Asn-206 and Asn-216. The helical transmembrane segment at 237-260 (SVNGVNALGLVVFSMCFGFVIGNM) threads the bilayer. Topologically, residues 261 to 269 (KEQGQALRE) are cytoplasmic. A helical membrane pass occupies residues 270–297 (FFDSLNEAIMRLVAVIMWYAPLGILFLI). Residues 298-318 (AGKIVEMEDMGVIGGQLAMYT) lie on the Extracellular side of the membrane. Residues 319–340 (VTVIVGLLIHAVIVLPLLYFLV) traverse the membrane as a helical segment. At 341-345 (TRKNP) the chain is on the cytoplasmic side. The segment at residues 346-376 (WVFIGGLLQALITALGTSSSSATLPITFKCL) is an intramembrane region (discontinuously helical). 363–365 (SSS) lines the L-aspartate pocket. At 377–385 (EENNGVDKR) the chain is on the cytoplasmic side. Residues 386–412 (ITRFVLPVGATINMDGTALYEALAAIF) traverse the membrane as a helical segment. Gly-394, Thr-396, and Asn-398 together coordinate Na(+). Residue Thr-402 participates in L-aspartate binding. The Extracellular portion of the chain corresponds to 413–425 (IAQVNNFDLNFGQ). The segment at residues 426–459 (IITISITATAASIGAAGIPQAGLVTMVIVLTSVG) is an intramembrane region (discontinuously helical). L-aspartate is bound at residue 443 to 447 (IPQAG). The Extracellular segment spans residues 460–472 (LPTDDITLIIAVD). A helical transmembrane segment spans residues 473–494 (WFLDRLRTTTNVLGDSLGAGIV). L-aspartate-binding residues include Asp-476 and Asn-483. Na(+)-binding residues include Asn-483 and Asp-487. Residues 495–543 (EHLSRHELKNRDVEMGNSVIEENEMKKPYQLIAQDNEPEKPVADSETKM) are Cytoplasmic-facing. The residue at position 512 (Ser-512) is a Phosphoserine. The disordered stretch occupies residues 522-543 (PYQLIAQDNEPEKPVADSETKM). Residues 531–543 (EPEKPVADSETKM) show a composition bias toward basic and acidic residues.

Belongs to the dicarboxylate/amino acid:cation symporter (DAACS) (TC 2.A.23) family. SLC1A3 subfamily. In terms of assembly, homotrimer. In terms of processing, glycosylated. In terms of tissue distribution, detected in brain, in Bergmann glia arborising into the molecular layer of the cerebellum (at protein level). Localized in brain and is highly enriched in the Purkinje cell layer in cerebellum. Intermediate level in lung, low level in spleen, skeletal muscle and testis.

It is found in the cell membrane. It carries out the reaction K(+)(in) + L-glutamate(out) + 3 Na(+)(out) + H(+)(out) = K(+)(out) + L-glutamate(in) + 3 Na(+)(in) + H(+)(in). The enzyme catalyses K(+)(in) + L-aspartate(out) + 3 Na(+)(out) + H(+)(out) = K(+)(out) + L-aspartate(in) + 3 Na(+)(in) + H(+)(in). It catalyses the reaction D-aspartate(out) + K(+)(in) + 3 Na(+)(out) + H(+)(out) = D-aspartate(in) + K(+)(out) + 3 Na(+)(in) + H(+)(in). Sodium-dependent, high-affinity amino acid transporter that mediates the uptake of L-glutamate and also L-aspartate and D-aspartate. Functions as a symporter that transports one amino acid molecule together with two or three Na(+) ions and one proton, in parallel with the counter-transport of one K(+) ion. Plays a redundant role in the rapid removal of released glutamate from the synaptic cleft, which is essential for terminating the postsynaptic action of glutamate. This chain is Excitatory amino acid transporter 1 (Slc1a3), found in Mus musculus (Mouse).